The sequence spans 239 residues: UPF0641 membrane protein YHR140W (239 aa).

Residues 1 to 11 (MMSCLVPTRFT) are Cytoplasmic-facing. A helical transmembrane segment spans residues 12–31 (LTLNTACLLTSTWGFVRATS). The Lumenal portion of the chain corresponds to 32 to 45 (VVLPPSLSKAGHKQ). Residues 46-66 (FLTIISIIATIINNAVNISNY) traverse the membrane as a helical segment. The Cytoplasmic segment spans residues 67–99 (YIQRNNKMNLETKKKSDFISRHVTLPVSLVLES). The helical transmembrane segment at 100-120 (IVATVYWPLRLFFVNLIMHGV) threads the bilayer. The Lumenal segment spans residues 121-125 (ESTAK). The helical transmembrane segment at 126-146 (TPFPMTVDMAIHLYPILYLLA) threads the bilayer. Residues 147–162 (DHYLSGSGTKFKLSNK) are Cytoplasmic-facing. The chain crosses the membrane as a helical span at residues 163-183 (HAWLIVTSLAFSYFQYLAFLI). Residues 184–204 (DAGQGQAYPYPFLDVNEPYKS) are Lumenal-facing. The chain crosses the membrane as a helical span at residues 205-225 (IIFVVVATITWAYYVFYQKFP). Residues 226–239 (PKYIKKSAKKGDKN) lie on the Cytoplasmic side of the membrane.

It belongs to the UPF0641 family.

It is found in the endoplasmic reticulum membrane. The sequence is that of UPF0641 membrane protein YHR140W from Saccharomyces cerevisiae (strain ATCC 204508 / S288c) (Baker's yeast).